Consider the following 569-residue polypeptide: Proline--tRNA ligase (569 aa).

It belongs to the class-II aminoacyl-tRNA synthetase family. ProS type 1 subfamily. In terms of assembly, homodimer.

It is found in the cytoplasm. It catalyses the reaction tRNA(Pro) + L-proline + ATP = L-prolyl-tRNA(Pro) + AMP + diphosphate. Functionally, catalyzes the attachment of proline to tRNA(Pro) in a two-step reaction: proline is first activated by ATP to form Pro-AMP and then transferred to the acceptor end of tRNA(Pro). As ProRS can inadvertently accommodate and process non-cognate amino acids such as alanine and cysteine, to avoid such errors it has two additional distinct editing activities against alanine. One activity is designated as 'pretransfer' editing and involves the tRNA(Pro)-independent hydrolysis of activated Ala-AMP. The other activity is designated 'posttransfer' editing and involves deacylation of mischarged Ala-tRNA(Pro). The misacylated Cys-tRNA(Pro) is not edited by ProRS. The sequence is that of Proline--tRNA ligase from Dehalococcoides mccartyi (strain ATCC BAA-2100 / JCM 16839 / KCTC 5957 / BAV1).